Here is a 417-residue protein sequence, read N- to C-terminus: Serine/threonine-protein phosphatase 4 regulatory subunit 2 (417 aa).

Polar residues-rich tracts occupy residues Glu-140–Arg-149, Asn-158–Gly-170, and Ala-186–Ser-196. Positions Glu-140–Asp-417 are disordered. Ser-159 carries the phosphoserine modification. Over residues Thr-197–Ser-213 the composition is skewed to basic and acidic residues. The segment covering Asp-214–Ser-226 has biased composition (low complexity). Ser-226 carries the phosphoserine modification. Residues Lys-231–Glu-258 are compositionally biased toward basic and acidic residues. Polar residues predominate over residues Thr-259–Ser-269. Positions Gln-283–Thr-297 are enriched in basic and acidic residues. Over residues Glu-298–Ser-311 the composition is skewed to acidic residues. The span at Met-318–Lys-327 shows a compositional bias: basic and acidic residues. Residues Glu-338–Asp-350 are compositionally biased toward acidic residues. Over residues Gln-353–Gly-363 the composition is skewed to basic and acidic residues. Residues Gly-385–Ser-399 are compositionally biased toward polar residues. Acidic residues predominate over residues Met-400–Asp-417.

It belongs to the PPP4R2 family. As to quaternary structure, serine/threonine-protein phosphatase 4 (PP4) occurs in different assemblies of the catalytic and one or more regulatory subunits. Component of the PP4 complexes PPP4C-PPP4R2, PPP4C-PPP4R2-PPP4R3A and PPP4C-PPP4R2-PPP4R3B. The PPP4C-PPP4R2 complex appears to be a tetramer composed of 2 molecules of PPP4C and 2 molecules of PPP4R2. Interacts with DDX20/GEMIN3 and GEMIN4. Interacts with RPA2; this DNA damage-dependent interaction recruits PPP4C leading to RPA2 dephosphorylation.

It localises to the cytoplasm. The protein resides in the cytoskeleton. The protein localises to the microtubule organizing center. It is found in the centrosome. Its subcellular location is the nucleus. Functionally, regulatory subunit of serine/threonine-protein phosphatase 4 (PP4). May regulate the activity of PPP4C at centrosomal microtubule organizing centers. Its interaction with the SMN complex leads to enhance the temporal localization of snRNPs, suggesting a role of PPP4C in maturation of spliceosomal snRNPs. The PPP4C-PPP4R2-PPP4R3A PP4 complex specifically dephosphorylates H2AX phosphorylated on 'Ser-140' (gamma-H2AX) generated during DNA replication and required for DNA double strand break repair. Mediates RPA2 dephosphorylation by recruiting PPP4C to RPA2 in a DNA damage-dependent manner. RPA2 dephosphorylation is required for the efficient RPA2-mediated recruitment of RAD51 to chromatin following double strand breaks, an essential step for DNA repair. The protein is Serine/threonine-protein phosphatase 4 regulatory subunit 2 (PPP4R2) of Pongo abelii (Sumatran orangutan).